Reading from the N-terminus, the 2541-residue chain is Talin-1 (2541 aa).

The region spanning 86–403 is the FERM domain; sequence RPLKIRMLDG…GYIDIILKKK (318 aa). A Phosphothreonine modification is found at Thr-167. The interval 280–435 is interaction with LAYN; sequence FQAHKNCGQM…PKKSTVLQQQ (156 aa). 5 positions are modified to phosphoserine: Ser-405, Ser-425, Ser-446, Ser-620, and Ser-729. The segment at 482–655 is helical bundle R1; the sequence is RGHMPPLTSA…QASGELLQQI (174 aa). Residues 656–786 form a helical bundle R2 region; sequence GESDTDPHFQ…ALNELLQHVK (131 aa). The segment at 787 to 911 is helical bundle R3; the sequence is AHATGAGPAG…NAAAQNAIKK (125 aa). Residues 913–1044 form a helical bundle R4 region; it reads LVQRLEHAAK…RTAAQKAQEA (132 aa). Residue Ser-1021 is modified to Phosphoserine. Residues 1046 to 1206 are helical bundle R5; sequence GPLEMDSALS…NRCVSCLPGQ (161 aa). A Phosphotyrosine modification is found at Tyr-1116. The residue at position 1142 (Thr-1142) is a Phosphothreonine. Residues Ser-1201 and Ser-1225 each carry the phosphoserine modification. The helical bundle R6 stretch occupies residues 1207–1357; that stretch reads RDVDNALRAV…QLITMCTQQA (151 aa). A Phosphothreonine modification is found at Thr-1263. A Phosphoserine modification is found at Ser-1323. The segment at 1327-1948 is interaction with SYNM; sequence AAPNLKSQLA…CSPSDAYTKK (622 aa). The segment at 1358-1453 is helical bundle R7A; it reads PGQKECDNAL…AYLVGVSDPN (96 aa). The interaction with VCL and F-actin stretch occupies residues 1359–1659; that stretch reads GQKECDNALR…SMRDKAPGQL (301 aa). A helical bundle R8 region spans residues 1461–1580; that stretch reads LVEPTQFARA…NLSAFASNPE (120 aa). The residue at position 1544 (Lys-1544) is an N6-acetyllysine. Residues 1581–1653 are helical bundle R7B; the sequence is FSSIPAQISP…IKKLITSMRD (73 aa). The helical bundle R9 stretch occupies residues 1655–1822; that stretch reads APGQLECETA…TLNEAASAAG (168 aa). The interval 1823–1973 is helical bundle R10; sequence VVGGMVDSIT…VLAALQAGNR (151 aa). Phosphoserine is present on Ser-1849. Thr-1855 is modified (phosphothreonine). At Ser-1878 the chain carries Phosphoserine. The interval 1974–2140 is helical bundle R11; sequence GTQACITAAS…TVKAVEDEAT (167 aa). N6-acetyllysine is present on Lys-2031. Phosphoserine is present on Ser-2040. Lys-2115 is subject to N6-acetyllysine. Residues 2141 to 2294 are helical bundle R12; it reads KGTRALEATT…QAAEAMKGTE (154 aa). The I/LWEQ domain occupies 2293 to 2533; that stretch reads TEWVDPEDPT…QIRQQQYKFL (241 aa). Residues 2300–2482 are helical bundle R13; that stretch reads DPTVIAENEL…AAQKAAAFEE (183 aa).

Part of a complex composed of THSD1, PTK2/FAK1, TLN1 and VCL. Interacts with THSD1; this promotes interaction with PTK2/FAK1 and VCL. Binds with high affinity to VCL and with low affinity to integrins. Interacts with APBB1IP; this inhibits VCL binding. Interacts with PTK2/FAK1. Interacts with PIP5K1C and NRAP. Interacts with LAYN. Interacts with SYNM. Interacts with ITGB1; the interaction is prevented by competitive binding of ITGB1BP1. Interacts with SVEP1. Interacts (via R7 domain) with KANK1 or KANK2 (via KN motif); this interaction likely initiates the assembly of cortical microtubule stabilization complexes (CMSCs) at the vicinity of focal adhesions. As to quaternary structure, interacts with VCL; shows reduced VCL binding compared to isoform 2. Interacts with APBB1IP; shows similar level of binding compared to isoform 2. In terms of assembly, interacts with VCL; shows enhanced VCL binding compared to isoform 1. Interacts with APBB1IP; shows similar level of binding compared to isoform 1. (Microbial infection) Interacts with human cytomegalovirus protein UL135. As to expression, expressed at low to non-detectable levels in many tissues but highly expressed in skin and pancreas with other tissues including kidney cortex, endocervix, testis, pituitary, liver, and spleen also showing robust expression.

Its subcellular location is the cell projection. The protein localises to the ruffle membrane. It localises to the cytoplasm. It is found in the cytoskeleton. The protein resides in the cell surface. Its subcellular location is the cell junction. The protein localises to the focal adhesion. Functionally, high molecular weight cytoskeletal protein concentrated at regions of cell-matrix and cell-cell contacts. Involved in connections of major cytoskeletal structures to the plasma membrane. With KANK1 co-organize the assembly of cortical microtubule stabilizing complexes (CMSCs) positioned to control microtubule-actin crosstalk at focal adhesions (FAs) rims. This chain is Talin-1 (TLN1), found in Homo sapiens (Human).